Here is a 534-residue protein sequence, read N- to C-terminus: NAD(P)H-quinone oxidoreductase subunit 2 (534 aa).

The next 14 membrane-spanning stretches (helical) occupy residues 15–35 (ILPEGIVILTLLGVLIVDLIL), 42–62 (WIGYLAIAGLFTSIVALYFQW), 79–99 (LSIVFRGIIALSAAVTILMSI), 109–129 (LAEFIAILLSATLGGMFLSGA), 132–152 (LVMIFISLETLSISSYLLTGY), 167–187 (LLIGASSTAVFLYGVSLLYGL), 210–230 (LGLVIALVFAIAGIGFKISAA), 244–264 (PTPVIAFLSVGSKAAGFALAI), 280–300 (FVFTALAVLSMILGNVVALAQ), 306–326 (MLAYSSIAQAGFVMIGLIAGT), 334–354 (IFYLLVYLFMNLCGFTCIILF), 378–398 (LGLSIALLSLGGIPPLAGFFG), 410–432 (GLYWLVLLGLVTTVVSIYYYIRV), and 466–486 (VGLVITLIATSLAGILSNPLF).

The protein belongs to the complex I subunit 2 family. As to quaternary structure, NDH-1 can be composed of about 15 different subunits; different subcomplexes with different compositions have been identified which probably have different functions.

The protein localises to the cellular thylakoid membrane. It catalyses the reaction a plastoquinone + NADH + (n+1) H(+)(in) = a plastoquinol + NAD(+) + n H(+)(out). The enzyme catalyses a plastoquinone + NADPH + (n+1) H(+)(in) = a plastoquinol + NADP(+) + n H(+)(out). Its function is as follows. NDH-1 shuttles electrons from an unknown electron donor, via FMN and iron-sulfur (Fe-S) centers, to quinones in the respiratory and/or the photosynthetic chain. The immediate electron acceptor for the enzyme in this species is believed to be plastoquinone. Couples the redox reaction to proton translocation, and thus conserves the redox energy in a proton gradient. Cyanobacterial NDH-1 also plays a role in inorganic carbon-concentration. This is NAD(P)H-quinone oxidoreductase subunit 2 from Nostoc punctiforme (strain ATCC 29133 / PCC 73102).